A 37-amino-acid polypeptide reads, in one-letter code: Calcitonin gene-related peptide (37 aa).

A disulfide bridge links C2 with C7. F37 carries the phenylalanine amide modification.

This sequence belongs to the calcitonin family.

CGRP induces vasodilation. It dilates a variety of vessels including the coronary, cerebral and systemic vasculature. Its abundance in the CNS also points toward a neurotransmitter or neuromodulator role. This is Calcitonin gene-related peptide from Pelophylax ridibundus (Marsh frog).